The chain runs to 62 residues: MDPRECVCMSGGICMCGDNCKCTTCNCKTYWKSCCPCCPPGCAKCARGCICKGGSDKCSCCP.

Residues C6, C8, C14, C16, C20, C22, C25, C27, C34, C35, C37, C38, C42, C45, C49, C51, C58, C60, and C61 each coordinate a divalent metal cation.

Belongs to the metallothionein superfamily. Type 1 family.

Its function is as follows. Seems to bind zinc and copper. Could play a special role in regulating zinc metabolism during the differentiation of stratified epithelia. In Homo sapiens (Human), this protein is Metallothionein-4 (MT4).